A 252-amino-acid polypeptide reads, in one-letter code: Tumor necrosis factor ligand superfamily member 15 (252 aa).

At 1-39 the chain is on the cytoplasmic side; sequence MAEELGLGFGEAVPVEMLPEGCRHRREARTGLAARSKAC. The helical; Signal-anchor for type II membrane protein transmembrane segment at 40–60 threads the bilayer; that stretch reads LALTCCLLSFPILAGLSTLLM. The Extracellular portion of the chain corresponds to 61–252; sequence TGQLRIPGKD…DKTFFGAFLI (192 aa). In terms of domain architecture, THD spans 96–252; that stretch reads PKAHLTIMRQ…DKTFFGAFLI (157 aa). A glycan (N-linked (GlcNAc...) asparagine) is linked at Asn134. A disulfide bridge connects residues Cys163 and Cys203. An N-linked (GlcNAc...) asparagine glycan is attached at Asn230.

It belongs to the tumor necrosis factor family. Homotrimer.

It is found in the membrane. Its function is as follows. Receptor for TNFRSF25 and TNFRSF6B. Mediates activation of NF-kappa-B. Inhibits vascular endothelial growth and angiogenesis (in vitro). Promotes activation of caspases and apoptosis. Promotes splenocyte alloactivation. In Rattus norvegicus (Rat), this protein is Tumor necrosis factor ligand superfamily member 15 (Tnfsf15).